The sequence spans 340 residues: Ketol-acid reductoisomerase (NADP(+)) (340 aa).

The region spanning 1 to 183 (MAITVYYDKD…GGGRTGIIET (183 aa)) is the KARI N-terminal Rossmann domain. Residues 26 to 29 (FGSQ), R49, S52, S54, and 84 to 87 (DEIQ) each bind NADP(+). H109 is a catalytic residue. G135 serves as a coordination point for NADP(+). Residues 184 to 329 (TFKAETETDL…RNLRAMMPWI (146 aa)) enclose the KARI C-terminal knotted domain. Residues D192, E196, E228, and E232 each coordinate Mg(2+). S253 lines the substrate pocket.

This sequence belongs to the ketol-acid reductoisomerase family. Mg(2+) serves as cofactor.

It catalyses the reaction (2R)-2,3-dihydroxy-3-methylbutanoate + NADP(+) = (2S)-2-acetolactate + NADPH + H(+). It carries out the reaction (2R,3R)-2,3-dihydroxy-3-methylpentanoate + NADP(+) = (S)-2-ethyl-2-hydroxy-3-oxobutanoate + NADPH + H(+). It participates in amino-acid biosynthesis; L-isoleucine biosynthesis; L-isoleucine from 2-oxobutanoate: step 2/4. The protein operates within amino-acid biosynthesis; L-valine biosynthesis; L-valine from pyruvate: step 2/4. Involved in the biosynthesis of branched-chain amino acids (BCAA). Catalyzes an alkyl-migration followed by a ketol-acid reduction of (S)-2-acetolactate (S2AL) to yield (R)-2,3-dihydroxy-isovalerate. In the isomerase reaction, S2AL is rearranged via a Mg-dependent methyl migration to produce 3-hydroxy-3-methyl-2-ketobutyrate (HMKB). In the reductase reaction, this 2-ketoacid undergoes a metal-dependent reduction by NADPH to yield (R)-2,3-dihydroxy-isovalerate. This is Ketol-acid reductoisomerase (NADP(+)) from Campylobacter jejuni (strain RM1221).